Consider the following 480-residue polypeptide: Salicylate hydroxylase asL1 (480 aa).

A helical transmembrane segment spans residues 17–37; that stretch reads PMEIAIVGGGIVGVILAIGLT. Positions 47 and 60 each coordinate FAD. N-linked (GlcNAc...) asparagine glycosylation occurs at asparagine 87. An FAD-binding site is contributed by arginine 131. Asparagine 168 carries N-linked (GlcNAc...) asparagine glycosylation. Active-site residues include arginine 213 and tyrosine 246. Asparagine 250 carries N-linked (GlcNAc...) asparagine glycosylation. Residues aspartate 329 and alanine 342 each contribute to the FAD site. N-linked (GlcNAc...) asparagine glycans are attached at residues asparagine 400 and asparagine 464.

Belongs to the paxM FAD-dependent monooxygenase family. It depends on FAD as a cofactor.

The protein localises to the membrane. The protein operates within secondary metabolite biosynthesis; terpenoid biosynthesis. In terms of biological role, salicylate hydroxylase; part of the gene cluster that mediates the biosynthesis of xenovulene A, an unusual meroterpenoid that has potent inhibitory effects on the human gamma-aminobutyrate A (GABAA) benzodiazepine receptor. The first step of xenovulene A biosynthesis is the biosynthesis of 3-methylorcinaldehyde performed by the non-reducing polyketide synthase aspks1. The salicylate hydroxylase asL1 then catalyzes the oxidative dearomatization of 3-methylorcinaldehyde to yield a dearomatized hydroxycyclohexadione. The 2-oxoglutarate-dependent dioxygenase asL3 further catalyzes the oxidative ring expansion to provide the first tropolone metabolite. The cytochrome P450 monooxygenase asR2 allows the synthesis of tropolone hemiacetal. In parallel, a previously unrecognised class of terpene cyclase, asR6, produces alpha-humulene from farnesylpyrophosphate (FPP). The putative Diels-Alderase asR5 probably catalyzes the formation of the tropolone-humulene skeleton by linking humulene and the polyketide moiety. Oxidative-ring contractions catalyzed by asL4 and asL6 then processively remove carbon atoms from the polyketide to yield xenovulene A. The chain is Salicylate hydroxylase asL1 from Sarocladium schorii (Acremonium strictum (strain IMI 501407)).